The sequence spans 143 residues: Large ribosomal subunit protein uL16c (143 aa).

This sequence belongs to the universal ribosomal protein uL16 family. In terms of assembly, part of the 50S ribosomal subunit.

The protein resides in the plastid. The protein localises to the chloroplast. The sequence is that of Large ribosomal subunit protein uL16c from Marchantia polymorpha (Common liverwort).